A 442-amino-acid polypeptide reads, in one-letter code: Hydrolase phmG (442 aa).

The active-site Nucleophile is the S259.

The protein belongs to the AB hydrolase superfamily. FUS2 hydrolase family. Homodimer.

Its pathway is mycotoxin biosynthesis. Functionally, hydrolyase; part of the gene cluster that mediates the biosynthesis of the mycotoxins phomacins, leucine-derived cytochalasans with potent actin polymerization-inhibitory activities and monocot-specific antigerminative activities. The first step in the pathway is catalyzed by the hybrid PKS-NRPS phmA, assisted by the enoyl reductase phmE, that are responsible for fusion of the leucine precursor and the polyketide backbone to produce a 2-pyrrolidone intermediate. The polyketide synthase module (PKS) of phmA is responsible for the synthesis of the polyketide backbone and the downstream nonribosomal peptide synthetase (NRPS) amidates the carboxyl end of the polyketide with the leucine precursor. Because phmA lacks a designated enoylreductase (ER) domain, the required activity is provided the enoyl reductase phmE. Reduction by the hydrolyase phmG, followed by dehydration and intra-molecular Diels-Alder cyclization by the Diels-Alderase phmD then yield the required isoindolone-fused macrocycle. A number of oxidative steps catalyzed by the tailoring cytochrome P450 monooxygenase phmB, the FAD-linked oxidoreductase phmC and the short-chain dehydrogenase/reductase phmF, are further required to afford the final products, phomacin D and phomacin E. The chain is Hydrolase phmG from Phaeosphaeria nodorum (strain SN15 / ATCC MYA-4574 / FGSC 10173) (Glume blotch fungus).